We begin with the raw amino-acid sequence, 380 residues long: 4-hydroxy-3-methylbut-2-en-1-yl diphosphate synthase (flavodoxin) (380 aa).

4 residues coordinate [4Fe-4S] cluster: Cys280, Cys283, Cys315, and Glu322.

The protein belongs to the IspG family. It depends on [4Fe-4S] cluster as a cofactor.

The enzyme catalyses (2E)-4-hydroxy-3-methylbut-2-enyl diphosphate + oxidized [flavodoxin] + H2O + 2 H(+) = 2-C-methyl-D-erythritol 2,4-cyclic diphosphate + reduced [flavodoxin]. Its pathway is isoprenoid biosynthesis; isopentenyl diphosphate biosynthesis via DXP pathway; isopentenyl diphosphate from 1-deoxy-D-xylulose 5-phosphate: step 5/6. In terms of biological role, converts 2C-methyl-D-erythritol 2,4-cyclodiphosphate (ME-2,4cPP) into 1-hydroxy-2-methyl-2-(E)-butenyl 4-diphosphate. This chain is 4-hydroxy-3-methylbut-2-en-1-yl diphosphate synthase (flavodoxin), found in Cutibacterium acnes (strain DSM 16379 / KPA171202) (Propionibacterium acnes).